Reading from the N-terminus, the 1894-residue chain is Plexin-A2 (1894 aa).

A signal peptide spans 1–34 (MEQRRPWPRALEVDSRSVVLLSVVWVLLAPPAAG). A Sema domain is found at 35–508 (MPQFSTFHSE…SERQVTRVPV (474 aa)). Residues 35–1237 (MPQFSTFHSE…VISDSLLTLP (1203 aa)) are Extracellular-facing. 2 N-linked (GlcNAc...) asparagine glycosylation sites follow: asparagine 76 and asparagine 91. Disulfide bonds link cysteine 94-cysteine 103, cysteine 129-cysteine 137, cysteine 284-cysteine 405, cysteine 300-cysteine 356, cysteine 374-cysteine 393, cysteine 511-cysteine 528, cysteine 517-cysteine 559, cysteine 520-cysteine 537, cysteine 531-cysteine 543, and cysteine 594-cysteine 613. The N-linked (GlcNAc...) asparagine glycan is linked to asparagine 327. Residues asparagine 598, asparagine 696, and asparagine 756 are each glycosylated (N-linked (GlcNAc...) asparagine). IPT/TIG domains are found at residues 858–951 (PQIT…QYTF), 954–1037 (PSVL…QFEY), 1041–1139 (PRVQ…KFIY), and 1143–1228 (PTFE…SVSV). N-linked (GlcNAc...) asparagine glycosylation is present at asparagine 1205. The chain crosses the membrane as a helical span at residues 1238-1258 (AIVSIAAGGSLLLIIVIIVLI). At 1259 to 1894 (AYKRKSREND…QLINAMSIES (636 aa)) the chain is on the cytoplasmic side. Residues 1261–1310 (KRKSRENDLTLKRLQMQMDNLESRVALECKEAFAELQTDINELTSDLDRS) are a coiled coil. Serine 1612 carries the post-translational modification Phosphoserine.

It belongs to the plexin family. Homodimer. The PLXNA2 homodimer interacts with a SEMA6A homodimer, giving rise to a heterotetramer. Interacts directly with NRP1 and NRP2. Interacts with RND1. In terms of tissue distribution, detected in fetal brain.

The protein localises to the cell membrane. Its function is as follows. Coreceptor for SEMA3A and SEMA6A. Necessary for signaling by SEMA6A and class 3 semaphorins and subsequent remodeling of the cytoskeleton. Plays a role in axon guidance, invasive growth and cell migration. Class 3 semaphorins bind to a complex composed of a neuropilin and a plexin. The plexin modulates the affinity of the complex for specific semaphorins, and its cytoplasmic domain is required for the activation of down-stream signaling events in the cytoplasm. This is Plexin-A2 (PLXNA2) from Homo sapiens (Human).